A 437-amino-acid chain; its full sequence is Glutamyl-tRNA reductase (437 aa).

Substrate is bound by residues 49–52 (TCNR), S109, 114–116 (ETQ), and Q120. Residue C50 is the Nucleophile of the active site. 189–194 (GAGKMS) contributes to the NADP(+) binding site.

It belongs to the glutamyl-tRNA reductase family. Homodimer.

The catalysed reaction is (S)-4-amino-5-oxopentanoate + tRNA(Glu) + NADP(+) = L-glutamyl-tRNA(Glu) + NADPH + H(+). It participates in porphyrin-containing compound metabolism; protoporphyrin-IX biosynthesis; 5-aminolevulinate from L-glutamyl-tRNA(Glu): step 1/2. Functionally, catalyzes the NADPH-dependent reduction of glutamyl-tRNA(Glu) to glutamate 1-semialdehyde (GSA). This is Glutamyl-tRNA reductase from Paenibacillus macerans (Bacillus macerans).